Reading from the N-terminus, the 279-residue chain is Pantothenate synthetase (279 aa).

Residue 26–33 (MGNLHEGH) coordinates ATP. His33 functions as the Proton donor in the catalytic mechanism. Gln57 is a (R)-pantoate binding site. Residue Gln57 coordinates beta-alanine. 144–147 (GKKD) contributes to the ATP binding site. Gln150 contributes to the (R)-pantoate binding site. ATP is bound by residues Val173 and 181 to 184 (LSSR).

This sequence belongs to the pantothenate synthetase family. In terms of assembly, homodimer.

It is found in the cytoplasm. It carries out the reaction (R)-pantoate + beta-alanine + ATP = (R)-pantothenate + AMP + diphosphate + H(+). It functions in the pathway cofactor biosynthesis; (R)-pantothenate biosynthesis; (R)-pantothenate from (R)-pantoate and beta-alanine: step 1/1. Functionally, catalyzes the condensation of pantoate with beta-alanine in an ATP-dependent reaction via a pantoyl-adenylate intermediate. The sequence is that of Pantothenate synthetase from Burkholderia ambifaria (strain MC40-6).